Here is a 214-residue protein sequence, read N- to C-terminus: cAMP-activated global transcriptional regulator Vfr (214 aa).

3',5'-cyclic AMP-binding positions include 59–60, 73–75, 87–88, 132–133, Arg-179, and Arg-185; these read RE, GEL, RS, and TT. Residues 142 to 214 enclose the HTH crp-type domain; it reads LDVTGRVART…GKTMVVFGTR (73 aa). The segment at residues 174–193 is a DNA-binding region (H-T-H motif); the sequence is RQEIGRIVGCSREMVGRVLK.

As to quaternary structure, homodimer.

Its function is as follows. Global cAMP-dependent transcriptional regulator that controls virulence gene expression by distinct cAMP-dependent and -independent mechanisms, which allow to fine tune its virulence program in response to specific host cues or environments. Controls the expression of many regulatory targets including type II, type III and type IV secretion systems, flagellar-mediated motility, and quorum sensing systems. Transcriptional control is exerted by binding to a well-characterized consensus site (5'-ANWWTGNGAWNYAGWTCACAT) within target promoters. Directly binds to the toxA upstream region to regulate exotoxin A production, to the lasR gene promoter to activate the las quorum-sensing system or to the exsA promoter to regulate type III secretion system. Autoregulates as well its own expression. The polypeptide is cAMP-activated global transcriptional regulator Vfr (vfr) (Pseudomonas aeruginosa (strain ATCC 15692 / DSM 22644 / CIP 104116 / JCM 14847 / LMG 12228 / 1C / PRS 101 / PAO1)).